Here is an 88-residue protein sequence, read N- to C-terminus: Protein U62 (88 aa).

The polypeptide is Protein U62 (Elephantid herpesvirus 1 (isolate Asian elephant/Berlin/Kiba/1998) (EIHV-1)).